Consider the following 666-residue polypeptide: Probable potassium transport system protein Kup (666 aa).

Helical transmembrane passes span 53-73 (FWAL…TSPL), 89-109 (VTPV…FIVV), 144-164 (LLLL…SMIT), 181-201 (PEFG…LFAV), 212-232 (AFAP…ALHI), 247-267 (AIHF…LVFL), 291-311 (WFCL…ALIL), 324-344 (LAPA…TVIA), 381-401 (IYLP…VLLF), 411-431 (YGIA…VVVW), 441-461 (AAAL…ANLL), and 463-483 (LLDG…LIWT).

It belongs to the HAK/KUP transporter (TC 2.A.72) family.

The protein resides in the cell inner membrane. It carries out the reaction K(+)(in) + H(+)(in) = K(+)(out) + H(+)(out). Functionally, transport of potassium into the cell. Likely operates as a K(+):H(+) symporter. This chain is Probable potassium transport system protein Kup, found in Nitrobacter hamburgensis (strain DSM 10229 / NCIMB 13809 / X14).